The sequence spans 329 residues: Protein-arginine N-acetylglucosaminyltransferase NleB (329 aa).

A glycan (N-beta-linked (GlcNAc) arginine; by autocatalysis) is linked at Arg13. 48–50 (QWF) provides a ligand contact to UDP-N-acetyl-alpha-D-glucosamine. A glycan (N-beta-linked (GlcNAc) arginine; by autocatalysis) is linked at Arg53. Tyr72 serves as a coordination point for UDP-N-acetyl-alpha-D-glucosamine. An N-beta-linked (GlcNAc) arginine; by autocatalysis glycan is attached at Arg159. 219–222 (YLDA) contributes to the UDP-N-acetyl-alpha-D-glucosamine binding site. The DXD motif motif lies at 221–223 (DAD). A Mn(2+)-binding site is contributed by Asp223. Glu253 (proton acceptor) is an active-site residue. Arg293 carries N-beta-linked (GlcNAc) arginine; by autocatalysis glycosylation. Mn(2+) contacts are provided by Asn320 and Ser322. Residues Ser322 and 327–329 (SSW) each bind UDP-N-acetyl-alpha-D-glucosamine.

This sequence belongs to the glycosyltransferase NleB family. Mn(2+) serves as cofactor. Post-translationally, auto-glycosylated: arginine GlcNAcylation is required for activity toward death domain-containing host target proteins.

The protein localises to the secreted. The protein resides in the host cell. The catalysed reaction is L-arginyl-[protein] + UDP-N-acetyl-alpha-D-glucosamine = N(omega)-(N-acetyl-beta-D-glucosaminyl)-L-arginyl-[protein] + UDP + H(+). Functionally, protein-arginine N-acetylglucosaminyltransferase effector that disrupts TNF signaling in infected cells, including NF-kappa-B signaling, apoptosis and necroptosis. Acts by catalyzing the transfer of a single N-acetylglucosamine (GlcNAc) to a conserved arginine residue in the death domain of host proteins FADD, TNFRSF1A and RIPK1: arginine GlcNAcylation prevents homotypic/heterotypic death domain interactions and assembly of the oligomeric TNF-alpha receptor complex, thereby disrupting TNF signaling. Has preference for host FADD as substrate compared to TNFRSF1A and RIPK1. Also acts on host proteins without a death domain: catalyzes GlcNAcylation of host GAPDH protein, thereby preventing GAPDH interaction with TRAF2 and TRAF3, leading to inhibit NF-kappa-B signaling and type I interferon production, respectively. Also displays intra-bacterial activity by mediating GlcNAcylation of glutathione synthetase GshB. Catalyzes auto-GlcNAcylation, which is required for activity toward death domain-containing host target proteins. This Citrobacter rodentium protein is Protein-arginine N-acetylglucosaminyltransferase NleB.